The sequence spans 229 residues: Cytidylate kinase (229 aa).

12-20 (GPSGSGKGT) contributes to the ATP binding site.

This sequence belongs to the cytidylate kinase family. Type 1 subfamily.

It localises to the cytoplasm. The enzyme catalyses CMP + ATP = CDP + ADP. The catalysed reaction is dCMP + ATP = dCDP + ADP. This Stutzerimonas stutzeri (strain A1501) (Pseudomonas stutzeri) protein is Cytidylate kinase.